A 353-amino-acid polypeptide reads, in one-letter code: Cyclic GMP-AMP synthase-like receptor (353 aa).

ATP contacts are provided by residues serine 60 and 72-74 (EYD). Mg(2+) is bound by residues glutamate 72, aspartate 74, and aspartate 183. Aspartate 183 provides a ligand contact to GTP. Lysine 245 contacts ATP. Positions 269 and 270 each coordinate Mn(2+).

This sequence belongs to the mab-21 family. Mg(2+) is required as a cofactor. It depends on Mn(2+) as a cofactor.

The catalysed reaction is GTP + ATP = 2',3'-cGAMP + 2 diphosphate. The enzyme catalyses GTP + ATP = pppGp(2'-5')A + diphosphate. It carries out the reaction pppGp(2'-5')A = 2',3'-cGAMP + diphosphate. Functionally, nucleotidyltransferase that catalyzes the formation of cyclic GMP-AMP (2',3'-cGAMP) from ATP and GTP and plays a key role in innate immunity. Acts as a key sensor of double-stranded RNA (dsRNA), the presence of dsRNA in the cytoplasm being a danger signal that triggers the immune responses. Directly binds dsRNA, activating the nucleotidyltransferase activity, leading to synthesis of 2',3'-cGAMP, a second messenger that binds to and activates Sting, thereby triggering the immune response via activation of the NF-kappa-B transcription factor. The protein is Cyclic GMP-AMP synthase-like receptor of Nicrophorus vespilloides (Boreal carrion beetle).